We begin with the raw amino-acid sequence, 614 residues long: UvrABC system protein C (614 aa).

The 78-residue stretch at 14–91 (TSPGCYIHKD…IKENKPKYNI (78 aa)) folds into the GIY-YIG domain. A UVR domain is found at 196–231 (DKIIDDLKSKMAVAAQSMEFERAAEYRDLIQAIGTL). Residues 595–614 (LSQVAEERVDYQTEGNHNEP) are disordered. Over residues 599 to 614 (AEERVDYQTEGNHNEP) the composition is skewed to basic and acidic residues.

This sequence belongs to the UvrC family. Interacts with UvrB in an incision complex.

The protein localises to the cytoplasm. In terms of biological role, the UvrABC repair system catalyzes the recognition and processing of DNA lesions. UvrC both incises the 5' and 3' sides of the lesion. The N-terminal half is responsible for the 3' incision and the C-terminal half is responsible for the 5' incision. In Streptococcus pneumoniae serotype 2 (strain D39 / NCTC 7466), this protein is UvrABC system protein C.